Here is a 459-residue protein sequence, read N- to C-terminus: MSNRMWGGRFASGPAEIMEEINASIGFDKRLAPQDIRGSLAHVAMLGKAGILPAEDVAAIEAGLKSVRDEIEAGTFAFKRELEDIHMSVESRLTEIVGPAAGRLHTARSRNDQVATDMKLWVRDTLDSLDQQAADLQRALADKALKHADTVMPGFTHLQSAQPVTFGHHCLAYVEMLARDRGRFRDARARLNESPLGAAALAGTSFPIDRHATAAALGFDRPTANSLDSVADRDFALEALAAASICAVHLSRFAEELVVWTSAQFNFVRLSDGFTTGSSIMPQKRNPDAAELVRAKSGRIIGALTGLLIVMKGLPLAYSKDMQEDKEGTFDALQALSLCLAAMTGMVKDLEPNAEVLARAAGSGYATATDLADWLVRELGLPFRQAHHVTGRLVGVASAKGVGLEALSLPEMQEAEPRITEAVYAVLGVENSVASRTSYGGTAPDNVRRQAQAWIERLG.

The protein belongs to the lyase 1 family. Argininosuccinate lyase subfamily.

The protein resides in the cytoplasm. The enzyme catalyses 2-(N(omega)-L-arginino)succinate = fumarate + L-arginine. It functions in the pathway amino-acid biosynthesis; L-arginine biosynthesis; L-arginine from L-ornithine and carbamoyl phosphate: step 3/3. This is Argininosuccinate lyase from Methylobacterium radiotolerans (strain ATCC 27329 / DSM 1819 / JCM 2831 / NBRC 15690 / NCIMB 10815 / 0-1).